A 350-amino-acid polypeptide reads, in one-letter code: Outer membrane porin PhoE (350 aa).

The first 21 residues, 1 to 21, serve as a signal peptide directing secretion; that stretch reads MKKSTLALVVMGVVASASVHA.

The protein belongs to the Gram-negative porin family. As to quaternary structure, homotrimer.

It is found in the cell outer membrane. Uptake of inorganic phosphate, phosphorylated compounds, and some other negatively charged solutes. The sequence is that of Outer membrane porin PhoE (phoE) from Enterobacter cloacae.